The chain runs to 420 residues: Protein translocase subunit SecY (420 aa).

The next 10 membrane-spanning stretches (helical) occupy residues 9–29, 61–81, 104–124, 141–161, 173–193, 203–223, 257–277, 300–320, 355–375, and 377–397; these read ILIT…PIPG, LSII…MELL, IVRY…SVGL, VFMI…MWIG, ISLI…SGTF, ILML…IIYV, LSGV…STIL, YNIL…SIVF, KLTL…WILV, and AMGV…QVAI.

Belongs to the SecY/SEC61-alpha family. In terms of assembly, component of the Sec protein translocase complex. Heterotrimer consisting of SecY, SecE and SecG subunits. The heterotrimers can form oligomers, although 1 heterotrimer is thought to be able to translocate proteins. Interacts with the ribosome. Interacts with SecDF, and other proteins may be involved. Interacts with SecA.

Its subcellular location is the cell inner membrane. In terms of biological role, the central subunit of the protein translocation channel SecYEG. Consists of two halves formed by TMs 1-5 and 6-10. These two domains form a lateral gate at the front which open onto the bilayer between TMs 2 and 7, and are clamped together by SecE at the back. The channel is closed by both a pore ring composed of hydrophobic SecY resides and a short helix (helix 2A) on the extracellular side of the membrane which forms a plug. The plug probably moves laterally to allow the channel to open. The ring and the pore may move independently. This chain is Protein translocase subunit SecY, found in Helicobacter pylori (strain J99 / ATCC 700824) (Campylobacter pylori J99).